Here is a 236-residue protein sequence, read N- to C-terminus: Predicted GPI-anchored protein 43 (236 aa).

The N-terminal stretch at 1-24 is a signal peptide; it reads MHQRNHHSILLTLLLYLQSIVALA. Asparagine 192, asparagine 195, and asparagine 198 each carry an N-linked (GlcNAc...) asparagine glycan. The GPI-anchor amidated glycine moiety is linked to residue glycine 208. Positions 209 to 236 are cleaved as a propeptide — removed in mature form; sequence SVCLTSSYLNSPIIILCAILTGTLFAMY.

Its subcellular location is the cell membrane. The chain is Predicted GPI-anchored protein 43 (PGA43) from Candida albicans (strain SC5314 / ATCC MYA-2876) (Yeast).